The sequence spans 252 residues: Imidazole glycerol phosphate synthase subunit HisF (252 aa).

Active-site residues include D11 and D130.

Belongs to the HisA/HisF family. In terms of assembly, heterodimer of HisH and HisF.

The protein resides in the cytoplasm. It carries out the reaction 5-[(5-phospho-1-deoxy-D-ribulos-1-ylimino)methylamino]-1-(5-phospho-beta-D-ribosyl)imidazole-4-carboxamide + L-glutamine = D-erythro-1-(imidazol-4-yl)glycerol 3-phosphate + 5-amino-1-(5-phospho-beta-D-ribosyl)imidazole-4-carboxamide + L-glutamate + H(+). Its pathway is amino-acid biosynthesis; L-histidine biosynthesis; L-histidine from 5-phospho-alpha-D-ribose 1-diphosphate: step 5/9. Functionally, IGPS catalyzes the conversion of PRFAR and glutamine to IGP, AICAR and glutamate. The HisF subunit catalyzes the cyclization activity that produces IGP and AICAR from PRFAR using the ammonia provided by the HisH subunit. The chain is Imidazole glycerol phosphate synthase subunit HisF from Syntrophomonas wolfei subsp. wolfei (strain DSM 2245B / Goettingen).